A 181-amino-acid chain; its full sequence is Protein Syd (181 aa).

It belongs to the Syd family.

The protein resides in the cell inner membrane. Interacts with the SecY protein in vivo. May bind preferentially to an uncomplexed state of SecY, thus functioning either as a chelating agent for excess SecY in the cell or as a regulatory factor that negatively controls the translocase function. The polypeptide is Protein Syd (Shigella flexneri).